A 179-amino-acid chain; its full sequence is UPF0227 protein Swoo_1808 (179 aa).

Belongs to the UPF0227 family.

The protein is UPF0227 protein Swoo_1808 of Shewanella woodyi (strain ATCC 51908 / MS32).